A 242-amino-acid chain; its full sequence is Ferritin, mitochondrial (242 aa).

The N-terminal 49 residues, 1–49 (MLSCFRLLSRHISPSLASLRPVRCCFALPLRWAPGRPLDPRQIAPRRPL), are a transit peptide targeting the mitochondrion. Positions 47–58 (RPLAAAASSRDP) are enriched in low complexity. Residues 47–71 (RPLAAAASSRDPTGPAAGPSRVRQN) form a disordered region. The Ferritin-like diiron domain occupies 70-219 (QNFHPDSEAA…DHVHNLVKMG (150 aa)). The Fe cation site is built by E87, E122, H125, E167, and Q201.

Belongs to the ferritin family. Homooligomer of 24 subunits. The functional molecule is roughly spherical and contains a central cavity into which the polymeric mineral iron core is deposited. Detected in testis and erythroleukemia. Expression is very low or not detectable in brain, colon, heart, kidney, liver, lung, muscle, placental, spleen and small intestine.

It localises to the mitochondrion. The enzyme catalyses 4 Fe(2+) + O2 + 4 H(+) = 4 Fe(3+) + 2 H2O. In terms of biological role, catalyzes the oxidation of ferrous iron(II) to ferric iron(III) and stores iron in a soluble, non-toxic, readily available form. Important for iron homeostasis. Iron is taken up in the ferrous form and deposited as ferric hydroxides after oxidation. In Homo sapiens (Human), this protein is Ferritin, mitochondrial.